Reading from the N-terminus, the 226-residue chain is Thymidylate kinase (226 aa).

12–19 (GIDGAGKS) lines the ATP pocket.

Belongs to the thymidylate kinase family.

It carries out the reaction dTMP + ATP = dTDP + ADP. In terms of biological role, phosphorylation of dTMP to form dTDP in both de novo and salvage pathways of dTTP synthesis. This chain is Thymidylate kinase, found in Verminephrobacter eiseniae (strain EF01-2).